Consider the following 207-residue polypeptide: Outer-membrane lipoprotein LolB (207 aa).

A signal peptide spans 1-21; it reads MPLPDFRLIRLLPLAALVLTA. Cys22 is lipidated: N-palmitoyl cysteine. Cys22 carries S-diacylglycerol cysteine lipidation.

The protein belongs to the LolB family. Monomer.

The protein localises to the cell outer membrane. Its function is as follows. Plays a critical role in the incorporation of lipoproteins in the outer membrane after they are released by the LolA protein. This chain is Outer-membrane lipoprotein LolB, found in Escherichia coli (strain SMS-3-5 / SECEC).